The following is a 314-amino-acid chain: NADH-ubiquinone oxidoreductase chain 1 (314 aa).

The next 8 helical transmembrane spans lie at 5–25, 78–98, 105–125, 151–171, 176–196, 227–247, 251–271, and 294–314; these read IMPL…VAFL, FSPI…PYLI, LGVL…MIAG, LALI…LNFY, YIWF…SCLA, LIFL…VVIF, DIYS…FIWV, and LSLN…SLLF.

This sequence belongs to the complex I subunit 1 family.

It is found in the mitochondrion inner membrane. It carries out the reaction a ubiquinone + NADH + 5 H(+)(in) = a ubiquinol + NAD(+) + 4 H(+)(out). Core subunit of the mitochondrial membrane respiratory chain NADH dehydrogenase (Complex I) that is believed to belong to the minimal assembly required for catalysis. Complex I functions in the transfer of electrons from NADH to the respiratory chain. The immediate electron acceptor for the enzyme is believed to be ubiquinone. This Anopheles quadrimaculatus (Common malaria mosquito) protein is NADH-ubiquinone oxidoreductase chain 1 (ND1).